A 372-amino-acid chain; its full sequence is Glutamate 5-kinase (372 aa).

Position 14 (lysine 14) interacts with ATP. 3 residues coordinate substrate: serine 54, aspartate 141, and asparagine 153. Residue 173 to 174 participates in ATP binding; sequence TD. In terms of domain architecture, PUA spans 280–358; it reads RGTLVLDDGA…DAIEALLGYV (79 aa).

It belongs to the glutamate 5-kinase family.

It localises to the cytoplasm. The enzyme catalyses L-glutamate + ATP = L-glutamyl 5-phosphate + ADP. It participates in amino-acid biosynthesis; L-proline biosynthesis; L-glutamate 5-semialdehyde from L-glutamate: step 1/2. Catalyzes the transfer of a phosphate group to glutamate to form L-glutamate 5-phosphate. The sequence is that of Glutamate 5-kinase from Pseudomonas aeruginosa (strain UCBPP-PA14).